We begin with the raw amino-acid sequence, 311 residues long: Methionyl-tRNA formyltransferase (311 aa).

Ser109–Pro112 is a (6S)-5,6,7,8-tetrahydrofolate binding site.

The protein belongs to the Fmt family.

The catalysed reaction is L-methionyl-tRNA(fMet) + (6R)-10-formyltetrahydrofolate = N-formyl-L-methionyl-tRNA(fMet) + (6S)-5,6,7,8-tetrahydrofolate + H(+). Attaches a formyl group to the free amino group of methionyl-tRNA(fMet). The formyl group appears to play a dual role in the initiator identity of N-formylmethionyl-tRNA by promoting its recognition by IF2 and preventing the misappropriation of this tRNA by the elongation apparatus. The protein is Methionyl-tRNA formyltransferase of Staphylococcus aureus (strain bovine RF122 / ET3-1).